Here is a 113-residue protein sequence, read N- to C-terminus: Large ribosomal subunit protein uL22 (113 aa).

This sequence belongs to the universal ribosomal protein uL22 family. As to quaternary structure, part of the 50S ribosomal subunit.

In terms of biological role, this protein binds specifically to 23S rRNA; its binding is stimulated by other ribosomal proteins, e.g. L4, L17, and L20. It is important during the early stages of 50S assembly. It makes multiple contacts with different domains of the 23S rRNA in the assembled 50S subunit and ribosome. Its function is as follows. The globular domain of the protein is located near the polypeptide exit tunnel on the outside of the subunit, while an extended beta-hairpin is found that lines the wall of the exit tunnel in the center of the 70S ribosome. This is Large ribosomal subunit protein uL22 from Geobacillus sp. (strain WCH70).